Here is a 639-residue protein sequence, read N- to C-terminus: 1-deoxy-D-xylulose-5-phosphate synthase (639 aa).

Thiamine diphosphate is bound by residues His79 and 120 to 122; that span reads AHS. Asp151 contacts Mg(2+). Thiamine diphosphate-binding positions include 152–153, Asn180, Tyr289, and Glu371; that span reads GA. Residue Asn180 coordinates Mg(2+).

Belongs to the transketolase family. DXPS subfamily. As to quaternary structure, homodimer. The cofactor is Mg(2+). Thiamine diphosphate is required as a cofactor.

It carries out the reaction D-glyceraldehyde 3-phosphate + pyruvate + H(+) = 1-deoxy-D-xylulose 5-phosphate + CO2. It functions in the pathway metabolic intermediate biosynthesis; 1-deoxy-D-xylulose 5-phosphate biosynthesis; 1-deoxy-D-xylulose 5-phosphate from D-glyceraldehyde 3-phosphate and pyruvate: step 1/1. In terms of biological role, catalyzes the acyloin condensation reaction between C atoms 2 and 3 of pyruvate and glyceraldehyde 3-phosphate to yield 1-deoxy-D-xylulose-5-phosphate (DXP). The chain is 1-deoxy-D-xylulose-5-phosphate synthase from Allorhizobium ampelinum (strain ATCC BAA-846 / DSM 112012 / S4) (Agrobacterium vitis (strain S4)).